Here is a 396-residue protein sequence, read N- to C-terminus: Phosphoglycerate kinase (396 aa).

Residues 21-23, Arg36, 59-62, Arg118, and Arg151 each bind substrate; these read DLN and HFDR. ATP is bound by residues Lys201, Glu323, and 353 to 356; that span reads GGDT.

The protein belongs to the phosphoglycerate kinase family. Monomer.

The protein localises to the cytoplasm. The catalysed reaction is (2R)-3-phosphoglycerate + ATP = (2R)-3-phospho-glyceroyl phosphate + ADP. Its pathway is carbohydrate degradation; glycolysis; pyruvate from D-glyceraldehyde 3-phosphate: step 2/5. In Granulibacter bethesdensis (strain ATCC BAA-1260 / CGDNIH1), this protein is Phosphoglycerate kinase.